A 272-amino-acid polypeptide reads, in one-letter code: Alkaline ceramidase (272 aa).

Helical transmembrane passes span 34-54 (FANTCTNLPIIVLPLVNIMLL) and 61-81 (VNGGLIFPQLLLTFNGLASTY). Zn(2+) is bound at residue H83. The next 4 membrane-spanning stretches (helical) occupy residues 96-116 (LSLVWIITVFLVVYIPVMKWF), 124-144 (LTLVRWVVLIVTALVSGLCFL), 148-168 (LNAIALMLFSIPAAVVINYEG), and 183-203 (ILALWGVAFSFWFADRLLCDF). H213 and H217 together coordinate Zn(2+). A helical transmembrane segment spans residues 214 to 234 (ALFHLLAGLAGYTIFIMFSMI). N-linked (GlcNAc...) asparagine glycosylation is present at N256.

Belongs to the alkaline ceramidase family. It depends on Zn(2+) as a cofactor.

The protein resides in the membrane. It catalyses the reaction an N-acyl-sphingoid base + H2O = a sphingoid base + a fatty acid. The catalysed reaction is an N-acylsphing-4-enine + H2O = sphing-4-enine + a fatty acid. The enzyme catalyses an N-acyl-15-methylhexadecasphing-4-enine + H2O = 15-methylhexadecasphing-4-enine + a fatty acid. Its pathway is lipid metabolism; sphingolipid metabolism. In terms of biological role, hydrolyzes the sphingolipid ceramide into sphingoid base and free fatty acid. C.elegans contain specific sphingoid bases, which are unique or different in structure compared to the sphingoid bases found in other animals. Two examples of these distinctive compounds are: 15-methylhexadecasphinganine and 15-methylhexadecasphing-4-enine. The sequence is that of Alkaline ceramidase from Caenorhabditis elegans.